Consider the following 260-residue polypeptide: tRNA pseudouridine synthase A (260 aa).

Catalysis depends on D52, which acts as the Nucleophile. A substrate-binding site is contributed by Y110.

The protein belongs to the tRNA pseudouridine synthase TruA family. Homodimer.

The catalysed reaction is uridine(38/39/40) in tRNA = pseudouridine(38/39/40) in tRNA. In terms of biological role, formation of pseudouridine at positions 38, 39 and 40 in the anticodon stem and loop of transfer RNAs. In Spiroplasma kunkelii, this protein is tRNA pseudouridine synthase A.